The following is a 90-amino-acid chain: Probable Fe(2+)-trafficking protein (90 aa).

Belongs to the Fe(2+)-trafficking protein family.

Its function is as follows. Could be a mediator in iron transactions between iron acquisition and iron-requiring processes, such as synthesis and/or repair of Fe-S clusters in biosynthetic enzymes. This is Probable Fe(2+)-trafficking protein from Albidiferax ferrireducens (strain ATCC BAA-621 / DSM 15236 / T118) (Rhodoferax ferrireducens).